The chain runs to 228 residues: PKHD-type hydroxylase Vapar_1809 (228 aa).

One can recognise a Fe2OG dioxygenase domain in the interval 78–179; the sequence is QISPPLFNRY…RTASYFWIQS (102 aa). Positions 97, 99, and 160 each coordinate Fe cation. Arginine 170 is a binding site for 2-oxoglutarate.

Fe(2+) is required as a cofactor. It depends on L-ascorbate as a cofactor.

This chain is PKHD-type hydroxylase Vapar_1809, found in Variovorax paradoxus (strain S110).